A 124-amino-acid polypeptide reads, in one-letter code: UPF0538 protein (124 aa).

This sequence belongs to the UPF0538 family.

In Dictyostelium discoideum (Social amoeba), this protein is UPF0538 protein.